Here is a 383-residue protein sequence, read N- to C-terminus: Succinyl-diaminopimelate desuccinylase (383 aa).

Position 74 (His-74) interacts with Zn(2+). Asp-76 is an active-site residue. Asp-107 is a Zn(2+) binding site. Glu-141 functions as the Proton acceptor in the catalytic mechanism. Zn(2+)-binding residues include Glu-142, Glu-170, and His-356.

The protein belongs to the peptidase M20A family. DapE subfamily. As to quaternary structure, homodimer. The cofactor is Zn(2+). Co(2+) is required as a cofactor.

It catalyses the reaction N-succinyl-(2S,6S)-2,6-diaminopimelate + H2O = (2S,6S)-2,6-diaminopimelate + succinate. It participates in amino-acid biosynthesis; L-lysine biosynthesis via DAP pathway; LL-2,6-diaminopimelate from (S)-tetrahydrodipicolinate (succinylase route): step 3/3. Catalyzes the hydrolysis of N-succinyl-L,L-diaminopimelic acid (SDAP), forming succinate and LL-2,6-diaminopimelate (DAP), an intermediate involved in the bacterial biosynthesis of lysine and meso-diaminopimelic acid, an essential component of bacterial cell walls. The chain is Succinyl-diaminopimelate desuccinylase from Ralstonia nicotianae (strain ATCC BAA-1114 / GMI1000) (Ralstonia solanacearum).